Here is a 391-residue protein sequence, read N- to C-terminus: ATPase GET3C (391 aa).

A mitochondrion-targeting transit peptide spans 1–50 (MAALLLLNRVSRSTSSISLHRVAGTLGFNSFNAQIHGDRISGTLFRVRSL). 77-84 (KGGVGKTS) provides a ligand contact to ATP. Residue Asp-106 is part of the active site. Residue Asn-328 coordinates ATP.

It belongs to the arsA ATPase family.

Its subcellular location is the mitochondrion matrix. It catalyses the reaction ATP + H2O = ADP + phosphate + H(+). The chain is ATPase GET3C from Arabidopsis thaliana (Mouse-ear cress).